We begin with the raw amino-acid sequence, 103 residues long: UPF0145 protein BT9727_3206 (103 aa).

Belongs to the UPF0145 family.

In Bacillus thuringiensis subsp. konkukian (strain 97-27), this protein is UPF0145 protein BT9727_3206.